The following is a 202-amino-acid chain: Superoxide dismutase [Mn], mitochondrial (202 aa).

A mitochondrion-targeting transit peptide spans 1–5; sequence HGRGM. Residue His31 participates in Mn(2+) binding. The residue at position 39 (Tyr39) is a 3'-nitrotyrosine. N6-acetyllysine; alternate is present on Lys49. At Lys49 the chain carries N6-succinyllysine; alternate. Position 79 (His79) interacts with Mn(2+). An N6-acetyllysine modification is found at Lys95. An N6-acetyllysine; alternate mark is found at Lys103 and Lys111. N6-succinyllysine; alternate occurs at positions 103 and 111. Residues Asp164 and His168 each contribute to the Mn(2+) site. An N6-acetyllysine modification is found at Lys183.

This sequence belongs to the iron/manganese superoxide dismutase family. In terms of assembly, homotetramer. Mn(2+) serves as cofactor. Nitrated under oxidative stress. Nitration coupled with oxidation inhibits the catalytic activity. Post-translationally, acetylation at Lys-122 decreases enzymatic activity. Deacetylated by SIRT3 upon exposure to ionizing radiations or after long fasting. In terms of processing, polyubiquitinated; leading to proteasomal degradation. Deubiquitinated by USP36 which increases protein stability.

Its subcellular location is the mitochondrion matrix. The catalysed reaction is 2 superoxide + 2 H(+) = H2O2 + O2. Its function is as follows. Destroys superoxide anion radicals which are normally produced within the cells and which are toxic to biological systems. This is Superoxide dismutase [Mn], mitochondrial (SOD2) from Oryctolagus cuniculus (Rabbit).